Consider the following 262-residue polypeptide: Putative hydro-lyase Cbei_2760 (262 aa).

This sequence belongs to the D-glutamate cyclase family.

The chain is Putative hydro-lyase Cbei_2760 from Clostridium beijerinckii (strain ATCC 51743 / NCIMB 8052) (Clostridium acetobutylicum).